The sequence spans 264 residues: MKQYLDLLRHVMETGSDRGDRTGTGTRSVFGYQMRFDLSEGFPVLTTKKLHLRSIIHELLWFLNGDTNIAYLKENGVSIWDEWADENGDLGPVYGAQWRSWPAPDGRHIDQIALLIEALKTNPNSRRHIVSAWNPALVDEMALPPCHCLFQFYVSDGKLSCQLYQRSADIFLGVPFNIASYALLTLMVAQVVGLKPGDFVHTLGDAHIYANHFEQAQLQMTRTPKALPTMRLNPDVKNLFGFKFEDFTLENYEADSSIKAPIAV.

Residue R21 coordinates dUMP. H51 lines the (6R)-5,10-methylene-5,6,7,8-tetrahydrofolate pocket. 126-127 (RR) is a binding site for dUMP. Residue C146 is the Nucleophile of the active site. Residues 166–169 (RSAD), N177, and 207–209 (HIY) contribute to the dUMP site. (6R)-5,10-methylene-5,6,7,8-tetrahydrofolate is bound at residue D169. A263 is a binding site for (6R)-5,10-methylene-5,6,7,8-tetrahydrofolate.

It belongs to the thymidylate synthase family. Bacterial-type ThyA subfamily. In terms of assembly, homodimer.

The protein resides in the cytoplasm. It carries out the reaction dUMP + (6R)-5,10-methylene-5,6,7,8-tetrahydrofolate = 7,8-dihydrofolate + dTMP. The protein operates within pyrimidine metabolism; dTTP biosynthesis. In terms of biological role, catalyzes the reductive methylation of 2'-deoxyuridine-5'-monophosphate (dUMP) to 2'-deoxythymidine-5'-monophosphate (dTMP) while utilizing 5,10-methylenetetrahydrofolate (mTHF) as the methyl donor and reductant in the reaction, yielding dihydrofolate (DHF) as a by-product. This enzymatic reaction provides an intracellular de novo source of dTMP, an essential precursor for DNA biosynthesis. This Agrobacterium fabrum (strain C58 / ATCC 33970) (Agrobacterium tumefaciens (strain C58)) protein is Thymidylate synthase.